The primary structure comprises 2164 residues: Genome polyprotein (2164 aa).

G2 carries the N-myristoyl glycine; by host lipid modification. Residues 2-1477 (GAQVSRQNVG…DLGIANMTIG (1476 aa)) lie on the Cytoplasmic side of the membrane. The tract at residues 208-239 (NVSVGYNHTHPGEQGREVVPSRTSSDNKRPSD) is disordered. Residues 572–588 (LTQNPVENYIDSVLNEV) are amphipathic alpha-helix. Active-site for protease 2A activity residues include H884 and D901. Zn(2+) contacts are provided by C918 and C920. The For protease 2A activity role is filled by C972. 2 residues coordinate Zn(2+): C978 and H980. The segment at 1104-1173 (SDSWLKKFTE…TIRLAPASVQ (70 aa)) is membrane-binding. An oligomerization region spans residues 1104–1237 (SDSWLKKFTE…SPGTGKSLAT (134 aa)). The RNA-binding stretch occupies residues 1125–1129 (GQKIS). The SF3 helicase domain occupies 1197-1357 (EARRIKNLYI…KEYLLDGKLD (161 aa)). 1227-1234 (GSPGTGKS) serves as a coordination point for ATP. C1365, C1376, and C1381 together coordinate Zn(2+). A C4-type; degenerate zinc finger spans residues 1365-1381 (CDVNIKIGNAKCCPFIC). The tract at residues 1408–1415 (EDRRRSSA) is RNA-binding. Positions 1419 to 1424 (MEAIFQ) are oligomerization. Residues 1478–1493 (IIANVVSIVGVIYIIY) lie within the membrane without spanning it. At 1494 to 2164 (KLFCTLQGPY…VLEHEWYEKF (671 aa)) the chain is on the cytoplasmic side. Y1503 carries the post-translational modification O-(5'-phospho-RNA)-tyrosine. In terms of domain architecture, Peptidase C3 spans 1522 to 1700 (GPEEEFGRSL…FSAMLLKSYF (179 aa)). Residues H1561, E1592, and C1668 each act as for protease 3C activity in the active site. Positions 1932 to 2045 (ECLMAFDYSN…SYNFKLDMAV (114 aa)) constitute a RdRp catalytic domain. Mg(2+)-binding residues include D1938 and D2031.

It belongs to the picornaviruses polyprotein family. As to quaternary structure, interacts with capsid protein VP1 and capsid protein VP3 to form heterotrimeric protomers. Interacts with capsid protein VP0, and capsid protein VP3 to form heterotrimeric protomers. Five protomers subsequently associate to form pentamers which serve as building blocks for the capsid. Interacts with capsid protein VP2, capsid protein VP3 and capsid protein VP4 following cleavage of capsid protein VP0. In terms of assembly, interacts with capsid protein VP1 and capsid protein VP3 in the mature capsid. As to quaternary structure, interacts with capsid protein VP0 and capsid protein VP1 to form heterotrimeric protomers. Five protomers subsequently associate to form pentamers which serve as building blocks for the capsid. Interacts with capsid protein VP4 in the mature capsid. Interacts with protein 2C; this interaction may be important for virion morphogenesis. Interacts with capsid protein VP1 and capsid protein VP3. In terms of assembly, homodimer. As to quaternary structure, homohexamer; forms a hexameric ring structure with 6-fold symmetry characteristic of AAA+ ATPases. Interacts (via N-terminus) with host RTN3 (via reticulon domain); this interaction is important for viral replication. Interacts with capsid protein VP3; this interaction may be important for virion morphogenesis. Interacts with protein 3CD. In terms of assembly, homodimer. Interacts with host GBF1. Interacts (via GOLD domain) with host ACBD3 (via GOLD domain); this interaction allows the formation of a viral protein 3A/ACBD3 heterotetramer with a 2:2 stoichiometry, which will stimulate the recruitment of host PI4KB in order to synthesize PI4P at the viral RNA replication sites. As to quaternary structure, interacts with RNA-directed RNA polymerase. Interacts with protein 3AB and with RNA-directed RNA polymerase. In terms of assembly, interacts with Viral protein genome-linked and with protein 3CD. Mg(2+) serves as cofactor. Post-translationally, specific enzymatic cleavages in vivo by the viral proteases yield processing intermediates and the mature proteins. Myristoylation is required for the formation of pentamers during virus assembly. Further assembly of 12 pentamers and a molecule of genomic RNA generates the provirion. In terms of processing, during virion maturation, immature virions are rendered infectious following cleavage of VP0 into VP4 and VP2. This maturation seems to be an autocatalytic event triggered by the presence of RNA in the capsid and it is followed by a conformational change infectious virion. Post-translationally, myristoylation is required during RNA encapsidation and formation of the mature virus particle. VPg is uridylylated by the polymerase into VPg-pUpU. This acts as a nucleotide-peptide primer for the genomic RNA replication.

The protein resides in the virion. Its subcellular location is the host cytoplasm. The protein localises to the host cytoplasmic vesicle membrane. It is found in the host nucleus. It catalyses the reaction a ribonucleoside 5'-triphosphate + H2O = a ribonucleoside 5'-diphosphate + phosphate + H(+). The catalysed reaction is Selective cleavage of Tyr-|-Gly bond in the picornavirus polyprotein.. It carries out the reaction RNA(n) + a ribonucleoside 5'-triphosphate = RNA(n+1) + diphosphate. The enzyme catalyses Selective cleavage of Gln-|-Gly bond in the poliovirus polyprotein. In other picornavirus reactions Glu may be substituted for Gln, and Ser or Thr for Gly.. Its activity is regulated as follows. Replication or transcription is subject to high level of random mutations by the nucleotide analog ribavirin. Forms an icosahedral capsid of pseudo T=3 symmetry with capsid proteins VP2 and VP3. The capsid is 300 Angstroms in diameter, composed of 60 copies of each capsid protein and enclosing the viral positive strand RNA genome. Capsid protein VP1 mainly forms the vertices of the capsid. Capsid protein VP1 interacts with host cell receptor to provide virion attachment to target host cells. This attachment induces virion internalization. Tyrosine kinases are probably involved in the entry process. After binding to its receptor, the capsid undergoes conformational changes. Capsid protein VP1 N-terminus (that contains an amphipathic alpha-helix) and capsid protein VP4 are externalized. Together, they shape a pore in the host membrane through which viral genome is translocated to host cell cytoplasm. Functionally, forms an icosahedral capsid of pseudo T=3 symmetry with capsid proteins VP2 and VP3. The capsid is 300 Angstroms in diameter, composed of 60 copies of each capsid protein and enclosing the viral positive strand RNA genome. Its function is as follows. Lies on the inner surface of the capsid shell. After binding to the host receptor, the capsid undergoes conformational changes. Capsid protein VP4 is released, Capsid protein VP1 N-terminus is externalized, and together, they shape a pore in the host membrane through which the viral genome is translocated into the host cell cytoplasm. In terms of biological role, component of immature procapsids, which is cleaved into capsid proteins VP4 and VP2 after maturation. Allows the capsid to remain inactive before the maturation step. Cysteine protease that cleaves viral polyprotein and specific host proteins. It is responsible for the autocatalytic cleavage between the P1 and P2 regions, which is the first cleavage occurring in the polyprotein. Also cleaves the host translation initiation factor EIF4G1, in order to shut down the capped cellular mRNA translation. Inhibits the host nucleus-cytoplasm protein and RNA trafficking by cleaving host members of the nuclear pores. Counteracts stress granule formation probably by antagonizing its assembly or promoting its dissassembly. Functionally, plays an essential role in the virus replication cycle by acting as a viroporin. Creates a pore in the host endoplasmic reticulum and as a consequence releases Ca2+ in the cytoplasm of infected cell. In turn, high levels of cytoplasmic calcium may trigger membrane trafficking and transport of viral ER-associated proteins to viroplasms, sites of viral genome replication. Its function is as follows. Induces and associates with structural rearrangements of intracellular membranes. Displays RNA-binding, nucleotide binding and NTPase activities. May play a role in virion morphogenesis and viral RNA encapsidation by interacting with the capsid protein VP3. In terms of biological role, localizes the viral replication complex to the surface of membranous vesicles. Together with protein 3CD binds the Cis-Active RNA Element (CRE) which is involved in RNA synthesis initiation. Acts as a cofactor to stimulate the activity of 3D polymerase, maybe through a nucleid acid chaperone activity. Localizes the viral replication complex to the surface of membranous vesicles. It inhibits host cell endoplasmic reticulum-to-Golgi apparatus transport and causes the disassembly of the Golgi complex, possibly through GBF1 interaction. This would result in depletion of MHC, trail receptors and IFN receptors at the host cell surface. Plays an essential role in viral RNA replication by recruiting ACBD3 and PI4KB at the viral replication sites, thereby allowing the formation of the rearranged membranous structures where viral replication takes place. Functionally, acts as a primer for viral RNA replication and remains covalently bound to viral genomic RNA. VPg is uridylylated prior to priming replication into VPg-pUpU. The oriI viral genomic sequence may act as a template for this. The VPg-pUpU is then used as primer on the genomic RNA poly(A) by the RNA-dependent RNA polymerase to replicate the viral genome. During genome replication, the VPg-RNA linkage is removed by the host TDP2, thereby accelerating replication. During the late stage of the replication cycle, host TDP2 is excluded from sites of viral RNA synthesis and encapsidation, allowing for the generation of progeny virions. Its function is as follows. Involved in the viral replication complex and viral polypeptide maturation. It exhibits protease activity with a specificity and catalytic efficiency that is different from protease 3C. Protein 3CD lacks polymerase activity. Protein 3CD binds to the 5'UTR of the viral genome. In terms of biological role, replicates the viral genomic RNA on the surface of intracellular membranes. May form linear arrays of subunits that propagate along a strong head-to-tail interaction called interface-I. Covalently attaches UMP to a tyrosine of VPg, which is used to prime RNA synthesis. The positive stranded RNA genome is first replicated at virus induced membranous vesicles, creating a dsRNA genomic replication form. This dsRNA is then used as template to synthesize positive stranded RNA genomes. ss(+)RNA genomes are either translated, replicated or encapsidated. Major viral protease that mediates proteolytic processing of the polyprotein. Cleaves host EIF5B, contributing to host translation shutoff. Also cleaves host PABPC1, contributing to host translation shutoff. Cleaves host NLRP1, triggers host N-glycine-mediated degradation of the autoinhibitory NLRP1 N-terminal fragment. This is Genome polyprotein from Human rhinovirus A serotype 89 (strain 41467-Gallo) (HRV-89).